The chain runs to 235 residues: Large ribosomal subunit protein uL3 (235 aa).

The segment at 138–157 (SVSHRSHGSTGGRQDPGKTF) is disordered. Position 151 is an N5-methylglutamine (Q151).

Belongs to the universal ribosomal protein uL3 family. As to quaternary structure, part of the 50S ribosomal subunit. Forms a cluster with proteins L14 and L19. Post-translationally, methylated by PrmB.

Its function is as follows. One of the primary rRNA binding proteins, it binds directly near the 3'-end of the 23S rRNA, where it nucleates assembly of the 50S subunit. The sequence is that of Large ribosomal subunit protein uL3 from Rhodospirillum centenum (strain ATCC 51521 / SW).